A 183-amino-acid polypeptide reads, in one-letter code: Oleosin-B2 (183 aa).

The segment at 1–23 is polar; sequence QASIFSRFFRMFSFIFPFVNVIK. 3 helical membrane passes run 24 to 44, 46 to 66, and 72 to 92; these read LIIASVTSLVCLAFSCVALGG, AVALIVSTPLFIMFSPILVPA, and LLASGLMAGTTLGLTGIGLIM. Residues 24–95 form a hydrophobic region; sequence LIIASVTSLV…TGIGLIMGLV (72 aa).

This sequence belongs to the oleosin family. The full-length protein is found in the tapetal lipid bodies of immature anthers, the proteolytically cleaved C-terminal product is found on the coats of pollen grains. Not present in seeds.

It localises to the lipid droplet. The protein localises to the membrane. Functionally, many of the major pollen coat proteins are derived from endoproteolytic cleavage of oleosin-like proteins. The sequence is that of Oleosin-B2 (OlnB2) from Brassica napus (Rape).